Consider the following 224-residue polypeptide: Large ribosomal subunit protein bL25 (224 aa).

The protein belongs to the bacterial ribosomal protein bL25 family. CTC subfamily. In terms of assembly, part of the 50S ribosomal subunit; part of the 5S rRNA/L5/L18/L25 subcomplex. Contacts the 5S rRNA. Binds to the 5S rRNA independently of L5 and L18.

This is one of the proteins that binds to the 5S RNA in the ribosome where it forms part of the central protuberance. This chain is Large ribosomal subunit protein bL25, found in Psychrobacter arcticus (strain DSM 17307 / VKM B-2377 / 273-4).